Consider the following 116-residue polypeptide: Staphylococcal complement inhibitor (116 aa).

An N-terminal signal peptide occupies residues 1–31 (MKIRKSILAGTLAIVLASPLVTNLDKNEAQA). The essential for activity stretch occupies residues 62–79 (LATGSLNTYYKRTIKISG).

The protein belongs to the SCIN family.

It localises to the secreted. Its function is as follows. Involved in countering the first line of host defense mechanisms. Efficiently inhibits opsonization, phagocytosis and killing of S.aureus by human neutrophils. Acts by binding and stabilizing human C3 convertases (C4b2a and C3bBb), leading to their inactivation. The convertases are no longer able to cleave complement C3, therefore preventing further C3b deposition on the bacterial surface and phagocytosis of the bacterium. Also prevents C5a-induced neutrophil responses. The chain is Staphylococcal complement inhibitor (scn) from Staphylococcus aureus (strain N315).